Consider the following 628-residue polypeptide: (+)-alpha pinene synthase 1, chloroplastic (628 aa).

The Mg(2+) site is built by D379, D383, and D531. The DDXXD motif signature appears at 379–383 (DDIYD).

Belongs to the terpene synthase family. Tpsd subfamily. Requires Mg(2+) as cofactor. The cofactor is Mn(2+).

It localises to the plastid. Its subcellular location is the chloroplast. The catalysed reaction is (2E)-geranyl diphosphate = (1R,5R)-alpha-pinene + diphosphate. It participates in terpene metabolism; oleoresin biosynthesis. It functions in the pathway secondary metabolite biosynthesis; terpenoid biosynthesis. In terms of biological role, monoterpene synthase (TPS) involved in the biosynthesis of monoterpene natural products included in conifer oleoresin secretions and volatile emissions; these compounds contribute to biotic and abiotic stress defense against herbivores and pathogens. Catalyzes the conversion of (2E)-geranyl diphosphate (GPP) to (+)-alpha-pinene. This chain is (+)-alpha pinene synthase 1, chloroplastic, found in Pinus contorta (Shore pine).